A 459-amino-acid chain; its full sequence is ATP synthase subunit beta (459 aa).

ATP is bound at residue 149–156 (GGAGVGKT).

This sequence belongs to the ATPase alpha/beta chains family. As to quaternary structure, F-type ATPases have 2 components, CF(1) - the catalytic core - and CF(0) - the membrane proton channel. CF(1) has five subunits: alpha(3), beta(3), gamma(1), delta(1), epsilon(1). CF(0) has three main subunits: a(1), b(2) and c(9-12). The alpha and beta chains form an alternating ring which encloses part of the gamma chain. CF(1) is attached to CF(0) by a central stalk formed by the gamma and epsilon chains, while a peripheral stalk is formed by the delta and b chains.

Its subcellular location is the cell inner membrane. The catalysed reaction is ATP + H2O + 4 H(+)(in) = ADP + phosphate + 5 H(+)(out). Its function is as follows. Produces ATP from ADP in the presence of a proton gradient across the membrane. The catalytic sites are hosted primarily by the beta subunits. The chain is ATP synthase subunit beta from Pseudomonas syringae pv. syringae (strain B728a).